The primary structure comprises 144 residues: L-fucose mutarotase (144 aa).

H22 (proton donor) is an active-site residue. Residues D30, R109, and 131–133 (YGN) each bind substrate.

Belongs to the RbsD / FucU family. FucU mutarotase subfamily. As to quaternary structure, homodecamer.

The protein resides in the cytoplasm. The enzyme catalyses alpha-L-fucose = beta-L-fucose. It functions in the pathway carbohydrate metabolism; L-fucose metabolism. Its function is as follows. Involved in the anomeric conversion of L-fucose. The polypeptide is L-fucose mutarotase (Haemophilus influenzae (strain PittGG)).